We begin with the raw amino-acid sequence, 547 residues long: Type I inositol polyphosphate 5-phosphatase 4 (547 aa).

Basic and acidic residues predominate over residues 56 to 67 (CSVRKSKTETRS). The tract at residues 56–80 (CSVRKSKTETRSKRNSGRARRNKLD) is disordered. Catalytic stretches follow at residues 387 to 402 (DRVIWLGDLNYRIALS) and 467 to 482 (KRRTPAWCDRILWHGS).

Belongs to the inositol polyphosphate 5-phosphatase family.

This chain is Type I inositol polyphosphate 5-phosphatase 4, found in Arabidopsis thaliana (Mouse-ear cress).